Reading from the N-terminus, the 574-residue chain is Probable E3 ubiquitin-protein ligase ipaH4.5 (574 aa).

The interaction with target proteins stretch occupies residues 1 to 284; it reads MKPINNHSFF…YHGPQIYFSM (284 aa). LRR repeat units follow at residues 63-82, 83-104, 105-122, 123-143, 144-165, 166-183, 184-205, 206-223, 224-246, and 247-270; these read REPVLNLSLLKLRSLPPLPL, HIRELNISNNELISLPENSPLL, TELHVNGNNLNILPTLPS, QLIKLNISFNRNLSCLPSLPP, YLQSLSARFNSLETLPELPSTL, TILRIEGNRLTVLPELPH, RLQELFVSGNRLQELPEFPQSL, KYLKVGENQLRRLSRLPQ, ELLALDVSNNLLTSLPENIITLP, and ICTNVNISGNPLSTHVLQSLQRLT. The tract at residues 285–292 is linker; that stretch reads SDGQQNTL. The interval 293–574 is E3 ubiquitin-protein ligase catalytic domain; sequence HRPLADAVTA…YRQLTDEVLA (282 aa). The NEL domain occupies 295–574; that stretch reads PLADAVTAWF…YRQLTDEVLA (280 aa). Catalysis depends on cysteine 379, which acts as the Glycyl thioester intermediate.

It belongs to the LRR-containing bacterial E3 ligase family. Post-translationally, ubiquitinated in the presence of host E1 ubiquitin-activating enzyme, E2 ubiquitin-conjugating enzyme and ubiquitin.

The protein localises to the secreted. The protein resides in the host cytoplasm. The enzyme catalyses S-ubiquitinyl-[E2 ubiquitin-conjugating enzyme]-L-cysteine + [acceptor protein]-L-lysine = [E2 ubiquitin-conjugating enzyme]-L-cysteine + N(6)-ubiquitinyl-[acceptor protein]-L-lysine.. Functionally, effector proteins function to alter host cell physiology and promote bacterial survival in host tissues. This protein is an E3 ubiquitin ligase that interferes with host's ubiquitination pathway. The sequence is that of Probable E3 ubiquitin-protein ligase ipaH4.5 (ipaH4.5) from Shigella flexneri.